The following is a 20-amino-acid chain: DGDALLKPCKLGDMQKLSSA.

It localises to the secreted. Functionally, prevents juvenile hormone from being hydrolyzed by general esterases by combining with it specifically. This is Juvenile hormone-binding protein (JHBP) from Bombyx mori (Silk moth).